We begin with the raw amino-acid sequence, 2176 residues long: Methyl-CpG-binding domain-containing protein 9 (2176 aa).

Over residues Met-1–Asp-13 the composition is skewed to polar residues. 2 disordered regions span residues Met-1–Lys-20 and Gly-28–Ser-85. Residues Asp-83 to Gly-133 form a PHD-type 1 zinc finger. The RING-type 1; degenerate zinc-finger motif lies at Cys-86–Arg-131. Residues Arg-258–Ser-327 form the MBD domain. One can recognise an FYR N-terminal domain in the interval Gly-403–Gly-456. Residues Glu-491–Ala-511 adopt a coiled-coil conformation. The 149-residue stretch at Ser-550–Lys-698 folds into the FYR C-terminal domain. Short sequence motifs (nuclear localization signal) lie at residues Ser-914–Asp-921, Lys-1124–Val-1131, and Tyr-1256–Ser-1263. One copy of the Pumilio repeat lies at Pro-1098–Lys-1137. The region spanning Ser-1130–Glu-1245 is the Bromo domain. A coiled-coil region spans residues Gln-1251–Ile-1273. A PHD-type 2 zinc finger spans residues Glu-1287–Ala-1337. Residues Cys-1290–Val-1335 form an RING-type 2; degenerate zinc finger. The Nuclear localization signal motif lies at Ala-1337–Ala-1344. Residues Gln-1410–Lys-1437 are a coiled coil. Disordered stretches follow at residues Gly-1472–Glu-1553 and Gly-1565–Gln-1595. 3 stretches are compositionally biased toward polar residues: residues Ser-1492–Gly-1513, Lys-1523–Ser-1532, and Asp-1585–Gln-1595. The stretch at Ser-1588–Arg-1628 forms a coiled coil. A Nuclear localization signal motif is present at residues Glu-1761–Ile-1768. Residues Ile-2136 to Ser-2176 are disordered.

As to quaternary structure, interacts with histone H4. As to expression, expressed in leaves, buds, flowers and stems.

The protein localises to the nucleus. The catalysed reaction is L-lysyl-[protein] + acetyl-CoA = N(6)-acetyl-L-lysyl-[protein] + CoA + H(+). Probable transcriptional regulator that acts as a histone acetyltransferase. Mediates the acetylation of histone H3 and H4 of target loci (e.g. FLC). Involved in an auxin-independent regulation of shoot branching and flowering time. This is Methyl-CpG-binding domain-containing protein 9 (MBD9) from Arabidopsis thaliana (Mouse-ear cress).